A 431-amino-acid polypeptide reads, in one-letter code: O-methyltransferase gliM (431 aa).

A coiled-coil region spans residues 20 to 85 (EFKAIVNDLR…SMDKLQLQLV (66 aa)). S-adenosyl-L-methionine contacts are provided by residues D287 and 319 to 321 (GDF). H338 acts as the Proton acceptor in catalysis.

Belongs to the class I-like SAM-binding methyltransferase superfamily. Cation-independent O-methyltransferase family. COMT subfamily.

The protein operates within mycotoxin biosynthesis. Functionally, O-methyltransferase; part of the gene cluster that mediates the biosynthesis of gliotoxin, a member of the epipolythiodioxopiperazine (ETP) class of toxins characterized by a disulfide bridged cyclic dipeptide. The first step in gliotoxin biosynthesis is the condensation of serine and phenylalanine to form the cyclo-L-phenylalanyl-L-serine diketopiperazine (DKP) by the NRPS gliP. GliP is also able to produce the DKP cyclo-L-tryptophanyl-L-serine, suggesting that the substrate specificity of the first adenylation (A) domain in gliP is sufficiently relaxed to accommodate both L-Phe and L-Trp. The cytochrome P450 monooxygenase gliC has been shown to catalyze the subsequent hydroxylation of the alpha-carbon of L-Phe in cyclo-L-phenylalanyl-L-serine whereas the second cytochrome P450 enzyme, gliF, is presumably involved in the modification of the DKP side chain. The glutathione S-transferase (GST) gliG then forms a bis-glutathionylated biosynthetic intermediate which is responsible for the sulfurization of gliotoxin. This bis-glutathionylated intermediate is subsequently processed by the gamma-glutamyl cyclotransferase gliK to remove both gamma-glutamyl moieties. Subsequent processing via gliI yields a biosynthetic intermediate, which is N-methylated via the N-methyltransferase gliN, before the gliotoxin oxidoreductase gliT-mediated disulfide bridge closure. GliN-mediated amide methylation confers stability to ETP, damping the spontaneous formation of tri- and tetrasulfides. Intracellular dithiol gliotoxin oxidized by gliT is subsequently effluxed by gliA. Gliotoxin contributes to pathogenesis during invasive aspergillosis. In macrophages and neutrophils, gliotoxin showed inhibition of various different cell functions including cytokine production, antigen presentation, phagocytosis, and production of reactive oxygen species. The chain is O-methyltransferase gliM from Aspergillus fumigatus (strain ATCC MYA-4609 / CBS 101355 / FGSC A1100 / Af293) (Neosartorya fumigata).